We begin with the raw amino-acid sequence, 353 residues long: Inactive ADP-ribosyltransferase ARH2 (353 aa).

Phosphoserine is present on Ser-27.

The protein belongs to the ADP-ribosylglycohydrolase family.

It localises to the cytoplasm. The protein localises to the myofibril. It is found in the sarcomere. In terms of biological role, required for myofibril assembly and outgrowth of the cardiac chambers in the developing heart. Appears to be catalytically inactive, showing no activity against O-acetyl-ADP-ribose. The chain is Inactive ADP-ribosyltransferase ARH2 (Adprhl1) from Rattus norvegicus (Rat).